An 860-amino-acid chain; its full sequence is Leucine--tRNA ligase (860 aa).

The short motif at 42–52 (PYPSGRLHMGH) is the 'HIGH' region element. The short motif at 619 to 623 (KMSKS) is the 'KMSKS' region element. ATP is bound at residue K622.

It belongs to the class-I aminoacyl-tRNA synthetase family.

It localises to the cytoplasm. The enzyme catalyses tRNA(Leu) + L-leucine + ATP = L-leucyl-tRNA(Leu) + AMP + diphosphate. The polypeptide is Leucine--tRNA ligase (Yersinia pseudotuberculosis serotype O:3 (strain YPIII)).